The sequence spans 429 residues: WRKY transcription factor 44 (429 aa).

Positions 159 to 223 (TGDRSSVDGY…YQGEHNHSKP (65 aa)) form a DNA-binding region, WRKY 1. Residues Cys190, Cys195, His218, and His220 each contribute to the Zn(2+) site. Disordered stretches follow at residues 214–279 (YQGE…RTEK) and 292–348 (AVPR…SDSL). Composition is skewed to polar residues over residues 254–275 (QDPN…STQN), 295–313 (RSTN…SSQC), and 334–345 (SEAGVSQGSVES). The segment at residues 343 to 408 (VESDSLEDGF…YEGKHNHHLL (66 aa)) is a DNA-binding region (WRKY 2). Positions 374, 379, 403, and 405 each coordinate Zn(2+). The span at 410–422 (SPPSSSTLPFNSP) shows a compositional bias: low complexity. The segment at 410–429 (SPPSSSTLPFNSPQLSKQTI) is disordered.

The protein belongs to the WRKY group I family. As to expression, leaf promordia, trichomes, atrichoblasts, fertilized eggs, seed coat.

Its subcellular location is the nucleus. In terms of biological role, transcription factor. Interacts specifically with the W box (5'-(T)TGAC[CT]-3'), a frequently occurring elicitor-responsive cis-acting element. Regulates trichome development, production of mucilage and tannin in seed coats, and maybe root hair development. This Arabidopsis thaliana (Mouse-ear cress) protein is WRKY transcription factor 44 (WRKY44).